We begin with the raw amino-acid sequence, 474 residues long: ABHD16B (474 aa).

The 119-residue stretch at 175–293 (VICCEGNAGF…MPQSWKGLVV (119 aa)) folds into the AB hydrolase-1 domain. Residues Ser248, Asp323, and His423 each act as charge relay system in the active site.

The protein belongs to the AB hydrolase superfamily. ABHD16 family.

The catalysed reaction is a 1,2-diacyl-sn-glycero-3-phospho-L-serine + H2O = a 2-acyl-sn-glycero-3-phospho-L-serine + a fatty acid + H(+). It carries out the reaction a 1-acylglycerol + H2O = glycerol + a fatty acid + H(+). The enzyme catalyses 1-(9Z-octadecenoyl)-glycerol + H2O = glycerol + (9Z)-octadecenoate + H(+). Its function is as follows. Hydrolyzes the sn-1 position of glycerophospholipids with high specificity towards phosphatidylserine (PS), PS-PLA1 enzyme. Also hydrolyzes the acyl chain of glycerolipids with a preference for the monoacylglycerol (MAG) 1-acylglycerol, MAG lipase. Plays a regulatory role in cellular lipid homeostasis by modulating genes involved in neutral lipid degradation and in phospholipid synthesis and composition. This Rattus norvegicus (Rat) protein is ABHD16B.